The following is a 425-amino-acid chain: Adenylosuccinate synthetase (425 aa).

Residues 12–18 (GDEGKGK) and 40–42 (GHT) contribute to the GTP site. Residue Asp-13 is the Proton acceptor of the active site. Asp-13 and Gly-40 together coordinate Mg(2+). Residues 13–16 (DEGK), 38–41 (NAGH), Thr-126, Arg-140, Gln-221, Thr-236, and Arg-300 contribute to the IMP site. Catalysis depends on His-41, which acts as the Proton donor. Substrate is bound at residue 296-302 (ATTGRPR). Residues Arg-302, 328–330 (KLD), and 410–412 (STG) contribute to the GTP site.

This sequence belongs to the adenylosuccinate synthetase family. In terms of assembly, homodimer. It depends on Mg(2+) as a cofactor.

The protein resides in the cytoplasm. It carries out the reaction IMP + L-aspartate + GTP = N(6)-(1,2-dicarboxyethyl)-AMP + GDP + phosphate + 2 H(+). It functions in the pathway purine metabolism; AMP biosynthesis via de novo pathway; AMP from IMP: step 1/2. In terms of biological role, plays an important role in the de novo pathway of purine nucleotide biosynthesis. Catalyzes the first committed step in the biosynthesis of AMP from IMP. The sequence is that of Adenylosuccinate synthetase from Thermodesulfovibrio yellowstonii (strain ATCC 51303 / DSM 11347 / YP87).